The chain runs to 168 residues: Signal peptidase complex catalytic subunit SEC11 (168 aa).

The Cytoplasmic portion of the chain corresponds to Met-1 to Asn-12. The chain crosses the membrane as a helical; Signal-anchor for type II membrane protein span at residues Leu-13–Val-30. The Lumenal segment spans residues Thr-31 to Glu-168. Catalysis depends on charge relay system residues Ser-44, His-83, and Asp-110. Residues Gly-154–Leu-165 form a C-terminal short (CTS) helix region.

It belongs to the peptidase S26B family. As to quaternary structure, component of the signal peptidase complex (SPC) composed of a catalytic subunit SEC11 and three accessory subunits SPC1, SPC2 and SPC3. The complex induces a local thinning of the ER membrane which is used to measure the length of the signal peptide (SP) h-region of protein substrates. This ensures the selectivity of the complex towards h-regions shorter than 18-20 amino acids. SPC associates with the translocon complex.

The protein localises to the endoplasmic reticulum membrane. It carries out the reaction Cleavage of hydrophobic, N-terminal signal or leader sequences from secreted and periplasmic proteins.. Its function is as follows. Catalytic component of the signal peptidase complex (SPC) which catalyzes the cleavage of N-terminal signal sequences from nascent proteins as they are translocated into the lumen of the endoplasmic reticulum. Specifically cleaves N-terminal signal peptides that contain a hydrophobic alpha-helix (h-region) shorter than 18-20 amino acids. The chain is Signal peptidase complex catalytic subunit SEC11 (SEC11) from Lachancea thermotolerans (strain ATCC 56472 / CBS 6340 / NRRL Y-8284) (Yeast).